Here is a 214-residue protein sequence, read N- to C-terminus: Redox-sensing transcriptional repressor Rex (214 aa).

Positions 16–55 (LYYRYLIFLNDEGKEKVSSTELAEAVQVDSASIRRDFSYF) form a DNA-binding region, H-T-H motif. 90–95 (GVGNMG) contacts NAD(+).

This sequence belongs to the transcriptional regulatory Rex family. In terms of assembly, homodimer.

The protein localises to the cytoplasm. Modulates transcription in response to changes in cellular NADH/NAD(+) redox state. The sequence is that of Redox-sensing transcriptional repressor Rex from Lactobacillus gasseri (strain ATCC 33323 / DSM 20243 / BCRC 14619 / CIP 102991 / JCM 1131 / KCTC 3163 / NCIMB 11718 / NCTC 13722 / AM63).